Here is a 209-residue protein sequence, read N- to C-terminus: MDDIFNMTVPIVVENNGRNERAYDIYSRLLKDRIVLLGTEVNDQVASLICAQLLFLESQDPEKEIYLYINSPGGSVTAGLAIYDTMNYITPNVATVCMGRAASMGALLLAAGEKNMRYALPNSQVMIHQPLGGYQGQATDIDIHAREILRMRQRLNEILMEQTGQSLEKVAQDTERDYFMTAEDAKAYGLIDKVLVSRKDLDIEHEKTE.

The active-site Nucleophile is the S103. Residue H128 is part of the active site.

It belongs to the peptidase S14 family. As to quaternary structure, fourteen ClpP subunits assemble into 2 heptameric rings which stack back to back to give a disk-like structure with a central cavity, resembling the structure of eukaryotic proteasomes.

It localises to the cytoplasm. It carries out the reaction Hydrolysis of proteins to small peptides in the presence of ATP and magnesium. alpha-casein is the usual test substrate. In the absence of ATP, only oligopeptides shorter than five residues are hydrolyzed (such as succinyl-Leu-Tyr-|-NHMec, and Leu-Tyr-Leu-|-Tyr-Trp, in which cleavage of the -Tyr-|-Leu- and -Tyr-|-Trp bonds also occurs).. Its function is as follows. Cleaves peptides in various proteins in a process that requires ATP hydrolysis. Has a chymotrypsin-like activity. Plays a major role in the degradation of misfolded proteins. The sequence is that of ATP-dependent Clp protease proteolytic subunit from Lawsonia intracellularis (strain PHE/MN1-00).